A 597-amino-acid chain; its full sequence is Leishmanolysin (597 aa).

The signal sequence occupies residues 1–39 (MSVDSSSTHRHRCVAARLVPLAAAGAAVTVAVGTAAAWA). The propeptide at 40 to 99 (HAGAVQHRCIHDAMQARVRQSVAAQRMAPSAVSAVGLPHVTLDAGNTAAGADPSTGTANV) is activation peptide. 2 disulfides stabilise this stretch: C124–C141 and C190–C229. H263 serves as a coordination point for Zn(2+). E264 is an active-site residue. H267 lines the Zn(2+) pocket. N299 carries an N-linked (GlcNAc...) asparagine glycan. Disulfide bonds link C313–C383, C390–C452, C403–C422, C412–C486, C463–C507, C512–C562, and C532–C555. Residue H332 participates in Zn(2+) binding. N404 carries N-linked (GlcNAc...) asparagine glycosylation. Residue N574 is the site of GPI-anchor amidated asparagine attachment. Residues 575-597 (AAGRRGPRAATALVVAALLAVAL) constitute a propeptide, removed in mature form.

The protein belongs to the peptidase M8 family. Zn(2+) serves as cofactor.

The protein resides in the cell membrane. The catalysed reaction is Preference for hydrophobic residues at P1 and P1' and basic residues at P2' and P3'. A model nonapeptide is cleaved at -Ala-Tyr-|-Leu-Lys-Lys-.. Has an integral role during the infection of macrophages in the mammalian host. In Leishmania amazonensis, this protein is Leishmanolysin (gp63).